The following is a 72-amino-acid chain: MPQNSKYSDTQFENVMHDIIIALEKHQASRDLSLMALGNVITNIFMQQVNESQRSEMADKFTQVLLKSINAK.

The protein belongs to the UPF0352 family.

This is UPF0352 protein Patl_3379 from Pseudoalteromonas atlantica (strain T6c / ATCC BAA-1087).